Here is a 109-residue protein sequence, read N- to C-terminus: Hainantoxin-XVIII-4 (109 aa).

Residues M1–A18 form the signal peptide. A propeptide spanning residues F19–A46 is cleaved from the precursor. 3 cysteine pairs are disulfide-bonded: C55-C68, C59-C108, and C61-C81.

The protein belongs to the neurotoxin 25 family. F7 subfamily. In terms of tissue distribution, expressed by the venom gland.

It is found in the secreted. In terms of biological role, putative ion channel inhibitor. This is Hainantoxin-XVIII-4 from Cyriopagopus hainanus (Chinese bird spider).